A 121-amino-acid polypeptide reads, in one-letter code: Group 1 truncated hemoglobin (121 aa).

Residue Met1 is modified to N-acetylmethionine. Residue His73 participates in heme binding.

The protein belongs to the truncated hemoglobin family. Group I subfamily. Monomer. Heme is required as a cofactor.

This chain is Group 1 truncated hemoglobin, found in Tetrahymena pyriformis.